We begin with the raw amino-acid sequence, 249 residues long: Probable WRKY transcription factor 64 (249 aa).

Positions 97–165 (SPTPRPDDGF…YLGKHVCKAV (69 aa)) form a DNA-binding region, WRKY.

It belongs to the WRKY group III family.

The protein localises to the nucleus. Functionally, transcription factor. Interacts specifically with the W box (5'-(T)TGAC[CT]-3'), a frequently occurring elicitor-responsive cis-acting element. The protein is Probable WRKY transcription factor 64 (WRKY64) of Arabidopsis thaliana (Mouse-ear cress).